The primary structure comprises 476 residues: Cysteine--tRNA ligase (476 aa).

C31 is a binding site for Zn(2+). The 'HIGH' region signature appears at 33-43; the sequence is PTVYNYAHIGN. 3 residues coordinate Zn(2+): C211, H236, and E240. The 'KMSKS' region motif lies at 269-273; it reads KMSKS. An ATP-binding site is contributed by K272.

It belongs to the class-I aminoacyl-tRNA synthetase family. As to quaternary structure, monomer. It depends on Zn(2+) as a cofactor.

The protein localises to the cytoplasm. The enzyme catalyses tRNA(Cys) + L-cysteine + ATP = L-cysteinyl-tRNA(Cys) + AMP + diphosphate. The polypeptide is Cysteine--tRNA ligase (Xanthomonas oryzae pv. oryzae (strain MAFF 311018)).